The primary structure comprises 478 residues: uncharacterized protein (478 aa).

In terms of domain architecture, RRM spans 5 to 85; the sequence is KRIYVGGLSS…SKLRIEEARP (81 aa). Residues serine 207 and serine 308 each carry the phosphoserine modification.

It localises to the nucleus. The protein localises to the nucleolus. This is an uncharacterized protein from Schizosaccharomyces pombe (strain 972 / ATCC 24843) (Fission yeast).